A 118-amino-acid polypeptide reads, in one-letter code: Large ribosomal subunit protein uL18 (118 aa).

This sequence belongs to the universal ribosomal protein uL18 family. In terms of assembly, part of the 50S ribosomal subunit; part of the 5S rRNA/L5/L18/L25 subcomplex. Contacts the 5S and 23S rRNAs.

This is one of the proteins that bind and probably mediate the attachment of the 5S RNA into the large ribosomal subunit, where it forms part of the central protuberance. The protein is Large ribosomal subunit protein uL18 of Campylobacter jejuni subsp. jejuni serotype O:6 (strain 81116 / NCTC 11828).